A 579-amino-acid chain; its full sequence is Altered inheritance of mitochondria protein 9, mitochondrial (579 aa).

The N-terminal 36 residues, 1 to 36 (MQSWNSQSFLSSHFTMLRYACKRAVPRLNAASGLRF), are a transit peptide targeting the mitochondrion.

The protein belongs to the AIM9 family.

The protein resides in the mitochondrion. The chain is Altered inheritance of mitochondria protein 9, mitochondrial (AIM9) from Yarrowia lipolytica (strain CLIB 122 / E 150) (Yeast).